The following is a 558-amino-acid chain: Acylase ACY 1 proenzyme (558 aa).

Catalysis depends on threonine 368, which acts as the Nucleophile.

This sequence belongs to the gamma-glutamyltransferase family. Dimer of two non-identical chains processed from the same precursor.

The catalysed reaction is (7R)-7-(4-carboxybutanamido)cephalosporanate + H2O = (7R)-7-aminocephalosporanate + glutarate. The enzyme catalyses an N-terminal (5-L-glutamyl)-[peptide] + an alpha-amino acid = 5-L-glutamyl amino acid + an N-terminal L-alpha-aminoacyl-[peptide]. It carries out the reaction glutathione + H2O = L-cysteinylglycine + L-glutamate. It catalyses the reaction an S-substituted glutathione + H2O = an S-substituted L-cysteinylglycine + L-glutamate. In terms of biological role, besides the cephalosporin acylase I activity which converts GL-7ACA into 7-ACA; this enzyme displays some gamma glutamyltranspeptidase activity. The protein is Acylase ACY 1 proenzyme (acyI) of Pseudomonas sp. (strain V22).